Reading from the N-terminus, the 129-residue chain is D-ribose pyranase (129 aa).

His-20 serves as the catalytic Proton donor. Substrate is bound by residues Asp-28, His-96, and 118–120 (YAN).

Belongs to the RbsD / FucU family. RbsD subfamily. In terms of assembly, homodecamer.

It is found in the cytoplasm. The catalysed reaction is beta-D-ribopyranose = beta-D-ribofuranose. It participates in carbohydrate metabolism; D-ribose degradation; D-ribose 5-phosphate from beta-D-ribopyranose: step 1/2. Its function is as follows. Catalyzes the interconversion of beta-pyran and beta-furan forms of D-ribose. This Halalkalibacterium halodurans (strain ATCC BAA-125 / DSM 18197 / FERM 7344 / JCM 9153 / C-125) (Bacillus halodurans) protein is D-ribose pyranase.